Reading from the N-terminus, the 178-residue chain is Protein Vhl (178 aa).

The protein belongs to the VHL family. As to quaternary structure, part of a complex with Cul2, Roc1a/Rbx1 and the elongin BC complex. Interacts with sima/Hif1a. Interacts with itself. Interacts with mgr and betaTub56D/tubulin beta-1 chain. Interacts with tubulin alpha-beta heterodimers by itself or in complex with mgr. Interacts with microtubules (MTs).

Its pathway is protein modification; protein ubiquitination. Involved in development of tracheal vasculature. Probably involved in halting cell migration at the end of vascular tube outgrowth. Possesses E3 ubiquitin ligase activity when in complex with Elongin BC complex, Cul2 and Rox1a/Rbx1, and can target sima/Hif1a for ubiquitination. May play a critical role in promoting microtubule stabilization when tubulins are correctly folded by the prefoldin complex. If tubulin is incorrectly folded, may promote its degradation. This is Protein Vhl from Drosophila melanogaster (Fruit fly).